Reading from the N-terminus, the 214-residue chain is Putative F-box protein At3g58910 (214 aa).

One can recognise an F-box domain in the interval 1 to 47 (MDRVSSLPDELLCHILSFLTTKETALTSLLSKREIIPLIKSVVFPTL).

The chain is Putative F-box protein At3g58910 from Arabidopsis thaliana (Mouse-ear cress).